The following is a 938-amino-acid chain: Protein O-mannosyl-transferase Tmtc2 (938 aa).

A topological domain (cytoplasmic) is located at residue M1. A helical transmembrane segment spans residues 2–22; that stretch reads PSLEPWLWGDSCSWLGMLAML. The Extracellular segment spans residues 23 to 34; sequence RLRLHKSNMDFT. The chain crosses the membrane as a helical span at residues 35-55; it reads CLFCCSLAFVLYLNTLGAGFV. At 56–108 the chain is on the cytoplasmic side; it reads YDDRRAILANADVSGGTPWQRSFSNDFWGTPLTDSGSHGSWRPLCVLSFRLNY. A helical transmembrane segment spans residues 109–129; that stretch reads LIGGGFAPWGFHLVNNLLHCV. Over 130–139 the chain is Extracellular; it reads ATALVVRVAR. The chain crosses the membrane as a helical span at residues 140 to 160; that stretch reads TLLASVWAVLAAGALFAAHPI. The Cytoplasmic segment spans residues 161–164; that stretch reads HTEA. A helical transmembrane segment spans residues 165-185; sequence VAGVVGRADLAACVCYLLTYL. Over 186–208 the chain is Extracellular; it reads SYLRHMRWRESGDPRQWLALGAT. A helical transmembrane segment spans residues 209 to 229; that stretch reads LILAAAGLLCKETAITALLVC. Over 230 to 249 the chain is Cytoplasmic; sequence ALFDVMRGLSGQVDKQRLRS. Residues 250–270 form a helical membrane-spanning segment; that stretch reads VCIVLGALFCMAYCRLVIVPG. Topologically, residues 271–291 are extracellular; it reads PQTAFSSADNPIARTPSAWTR. Residues 292–312 traverse the membrane as a helical segment; that stretch reads LLTFLYLPVFNLRLLLQPNVL. The Cytoplasmic segment spans residues 313-510; the sequence is SFDWGMDALP…HACVLIMSLS (198 aa). The interval 450-480 is disordered; that stretch reads RSSSSCSNSTNSSSSSSSSSSSSSSSSSSLS. A helical membrane pass occupies residues 511 to 531; it reads FLALPFLPASNLLFYVGFVVA. At 532–533 the chain is on the extracellular side; the sequence is ER. A helical membrane pass occupies residues 534 to 554; the sequence is LLYLPSVGFCLLVGYGVSKLM. Residues 555–562 are Cytoplasmic-facing; sequence SCNQRTRN. A helical membrane pass occupies residues 563-580; sequence ILLLSFSLLLAAMSLRTL. Residues 581–938 lie on the Extracellular side of the membrane; the sequence is RRNADWRDEE…NLAKLGVTNV (358 aa). 9 TPR repeats span residues 602-635, 636-669, 670-703, 715-748, 753-786, 788-821, 822-855, 856-889, and 890-923; these read PKALGNLGSVLSSQGRYEEAKQVLQEAIRFRPNM, ADVHFNLGILHQNQQVYPAAVECFQRAIKFRPNL, AVAYLNLGISFIALGKRQQAIEILQAGSNLDGAA, SSAYLQLGALYVEQGKLQRALAIYREALSSLPGL, EILYQRIGDVLGRLQQWDEAERHHRAALELQPNQ, AAHLSYGITLARNSSRASEAEMWFKRALKLAPEQ, ASVYHHYAEFLSLQSRHHESAIYHRRAAELAPND, YTLVVAAATAMRLLDRKVDAEMWYRKAVALRPGD, and AHAHTNLGAILHLLGRTNHAAASYKAALRLQPGD. N800 is a glycosylation site (N-linked (GlcNAc...) asparagine).

This sequence belongs to the TMTC family.

It localises to the membrane. The protein localises to the endoplasmic reticulum. It carries out the reaction a di-trans,poly-cis-dolichyl beta-D-mannosyl phosphate + L-seryl-[protein] = 3-O-(alpha-D-mannosyl)-L-seryl-[protein] + a di-trans,poly-cis-dolichyl phosphate + H(+). It catalyses the reaction a di-trans,poly-cis-dolichyl beta-D-mannosyl phosphate + L-threonyl-[protein] = 3-O-(alpha-D-mannosyl)-L-threonyl-[protein] + a di-trans,poly-cis-dolichyl phosphate + H(+). It functions in the pathway protein modification; protein glycosylation. In terms of biological role, transfers mannosyl residues to the hydroxyl group of serine or threonine residues. This Drosophila melanogaster (Fruit fly) protein is Protein O-mannosyl-transferase Tmtc2.